The chain runs to 291 residues: Urease accessory protein UreD (291 aa).

This sequence belongs to the UreD family. UreD, UreF and UreG form a complex that acts as a GTP-hydrolysis-dependent molecular chaperone, activating the urease apoprotein by helping to assemble the nickel containing metallocenter of UreC. The UreE protein probably delivers the nickel.

Its subcellular location is the cytoplasm. In terms of biological role, required for maturation of urease via the functional incorporation of the urease nickel metallocenter. In Acinetobacter baumannii (strain SDF), this protein is Urease accessory protein UreD.